The chain runs to 300 residues: MVRVAVAGGTGGVGYAIVDALKAQTEHEFIVLSRTESPEYAAKNNVKVVSIDYSDVSQISKILDEHHIHTVISALCIVSKEHSDSQLNLVRGAAGSQSVKRFVPSEYGSAYEEKHALARPSTGLKAVAVKELAKTHLEYTSFVNGLFLDYLCMPTVPSHLAAGIRFFDIPSRTSVGIGSGTVPLVMTHTRDVGRFVVASLSLPKWENRSFIVGDRQSWHDVINIAGKITGEKWPSLRPSKSSGSHEPAHRAAYSASLKEHGDWFESGTFSSTLSSGSVYLNELFPEIIPSYGRRWPQDFD.

It belongs to the NmrA-type oxidoreductase family. Isoflavone reductase subfamily.

It functions in the pathway polyketide biosynthesis. Oxidoreductase; part of the gene cluster A that mediates the biosynthesis of botcinic acid and its botcinin derivatives, acetate-derived polyketides that contribute to virulence when combined with the sesquiterpene botrydial. Botcinic acid and its derivatives have been shown to induce chlorosis and necrosis during host plant infection, but also have antifungal activities. Two polyketide synthases, BOA6 and BOA9, are involved in the biosynthesis of botcinins. BOA6 mediates the formation of the per-methylated tetraketide core by condensation of four units of malonyl-CoA with one unit of acetyl-CoA, which would be methylated in activated methylene groups to yield a bicyclic acid intermediate that could then either be converted to botrylactone derivatives or lose the starter acetate unit through a retro-Claisen type C-C bond cleavage to yield botcinin derivatives. The second polyketide synthase, BOA9, is probably required for the biosynthesis of the tetraketide side chain of botcinins. The methyltransferase (MT) domain within BOA6 is probably responsible for the incorporation of four methyl groups. The trans-enoyl reductase BOA5 might take over the enoyl reductase function of BOA6 that misses an ER domain. The monooxygenases BOA2, BOA3 and BOA4 might be involved in further hydroxylations at C4, C5 and C8, whereas BOA7, close to BOA9, could potentially be involved in the hydroxylation at C4 in the side chain of botcinins. In Botryotinia fuckeliana (strain B05.10) (Noble rot fungus), this protein is Oxidoreductase BOA1.